We begin with the raw amino-acid sequence, 277 residues long: Shikimate dehydrogenase (NADP(+)) (277 aa).

Shikimate-binding positions include 15-17 (SLS) and threonine 62. Catalysis depends on lysine 66, which acts as the Proton acceptor. 2 residues coordinate shikimate: asparagine 87 and aspartate 102. NADP(+) contacts are provided by residues 127-131 (GAGGA), 151-156 (NRTVDK), and isoleucine 219. Residue tyrosine 221 coordinates shikimate. Residue glycine 242 participates in NADP(+) binding.

This sequence belongs to the shikimate dehydrogenase family. In terms of assembly, homodimer.

The enzyme catalyses shikimate + NADP(+) = 3-dehydroshikimate + NADPH + H(+). It participates in metabolic intermediate biosynthesis; chorismate biosynthesis; chorismate from D-erythrose 4-phosphate and phosphoenolpyruvate: step 4/7. Functionally, involved in the biosynthesis of the chorismate, which leads to the biosynthesis of aromatic amino acids. Catalyzes the reversible NADPH linked reduction of 3-dehydroshikimate (DHSA) to yield shikimate (SA). The chain is Shikimate dehydrogenase (NADP(+)) from Bacillus anthracis (strain CDC 684 / NRRL 3495).